The following is a 204-amino-acid chain: NAD(P)H dehydrogenase (quinone) (204 aa).

A Flavodoxin-like domain is found at 4 to 195; sequence IQIVFYSMYG…AIARFQGAHV (192 aa). Residues 10–15 and 83–85 each bind FMN; these read SMYGHI and TRF. Tyr-12 lines the NAD(+) pocket. Residue Trp-103 coordinates substrate. Residues 118 to 124 and His-139 each bind FMN; that span reads STATQHG.

The protein belongs to the WrbA family. FMN is required as a cofactor.

The catalysed reaction is a quinone + NADH + H(+) = a quinol + NAD(+). The enzyme catalyses a quinone + NADPH + H(+) = a quinol + NADP(+). In Trichlorobacter lovleyi (strain ATCC BAA-1151 / DSM 17278 / SZ) (Geobacter lovleyi), this protein is NAD(P)H dehydrogenase (quinone).